The primary structure comprises 104 residues: Thiosulfate sulfurtransferase PspE (104 aa).

An N-terminal signal peptide occupies residues 1–19 (MFKKGLLALALVFSLPVFA). Positions 20–104 (AEHWIDVRVP…KDIAMPKVKG (85 aa)) constitute a Rhodanese domain. Residue Cys-67 is the Cysteine persulfide intermediate of the active site.

In terms of assembly, monomer.

The protein resides in the periplasm. It catalyses the reaction thiosulfate + hydrogen cyanide = thiocyanate + sulfite + 2 H(+). With respect to regulation, inhibited by thiosulfate above 100 mM, particularly at low cyanide concentrations (&lt;5 mM). Inhibited by sodium sulfate or sodium chloride at 0.25 M which gives around 50% inhibition of rhodanese activity. Addition of sodium phosphate at the same concentration results in about 65% inhibition. Sulfite strongly inhibits PspE activity (1 mM sodium sulfite resulted in more than 50% inhibition of rhodanese activity). Its function is as follows. The phage shock protein (psp) operon (pspABCDE) may play a significant role in the competition for survival under nutrient- or energy-limited conditions. PspE catalyzes the sulfur-transfer reaction from thiosulfate to cyanide, to form sulfite and thiocyanate. Also able to use dithiol (dithiothreitol) as an alternate sulfur acceptor. Also possesses a very low mercaptopyruvate sulfurtransferase activity. This chain is Thiosulfate sulfurtransferase PspE (pspE), found in Escherichia coli (strain K12).